The following is a 121-amino-acid chain: Two-component response regulator ORR13 (121 aa).

Residues 5-121 (HVLVVDDTHV…ADVPRILNYI (117 aa)) form the Response regulatory domain. The residue at position 55 (aspartate 55) is a 4-aspartylphosphate.

This sequence belongs to the ARR family. Type-A subfamily. Post-translationally, two-component system major event consists of a His-to-Asp phosphorelay between a sensor histidine kinase (HK) and a response regulator (RR). In plants, the His-to-Asp phosphorelay involves an additional intermediate named Histidine-containing phosphotransfer protein (HPt). This multistep phosphorelay consists of a His-Asp-His-Asp sequential transfer of a phosphate group between first a His and an Asp of the HK protein, followed by the transfer to a conserved His of the HPt protein and finally the transfer to an Asp in the receiver domain of the RR protein. Expressed in flowers and panicles.

In terms of biological role, functions as a response regulator involved in His-to-Asp phosphorelay signal transduction system. Phosphorylation of the Asp residue in the receiver domain activates the ability of the protein to promote the transcription of target genes. Type-A response regulators seem to act as negative regulators of the cytokinin signaling. The protein is Two-component response regulator ORR13 of Oryza sativa subsp. japonica (Rice).